A 200-amino-acid polypeptide reads, in one-letter code: Large ribosomal subunit protein uL18 (200 aa).

The protein belongs to the universal ribosomal protein uL18 family. In terms of assembly, part of the 50S ribosomal subunit. Contacts the 5S and 23S rRNAs.

Functionally, this is one of the proteins that bind and probably mediate the attachment of the 5S RNA into the large ribosomal subunit, where it forms part of the central protuberance. This Thermococcus sibiricus (strain DSM 12597 / MM 739) protein is Large ribosomal subunit protein uL18.